A 551-amino-acid chain; its full sequence is Cation/acetate symporter ActP (551 aa).

Helical transmembrane passes span 5–25 (HWSA…ALTG), 34–54 (IQAI…TYWA), 77–97 (GLAI…SALV), 104–124 (GLIY…LIAE), 150–170 (LSAC…MVGA), 184–204 (VAVV…GMLA), 207–227 (WVQI…AIMV), 263–283 (ISAL…PHIL), 304–324 (GFIG…ILLV), 356–376 (FFLG…VAGL), 406–426 (VSKI…ILFE), 430–450 (IAFM…PIII), 469–489 (LGLS…VTIL), and 498–518 (YEYP…FFSI).

This sequence belongs to the sodium:solute symporter (SSF) (TC 2.A.21) family.

It localises to the cell inner membrane. In terms of biological role, transports acetate. The sequence is that of Cation/acetate symporter ActP from Yersinia pestis bv. Antiqua (strain Antiqua).